A 349-amino-acid polypeptide reads, in one-letter code: Phosphoribosylformylglycinamidine cyclo-ligase (349 aa).

Belongs to the AIR synthase family.

The protein resides in the cytoplasm. The enzyme catalyses 2-formamido-N(1)-(5-O-phospho-beta-D-ribosyl)acetamidine + ATP = 5-amino-1-(5-phospho-beta-D-ribosyl)imidazole + ADP + phosphate + H(+). Its pathway is purine metabolism; IMP biosynthesis via de novo pathway; 5-amino-1-(5-phospho-D-ribosyl)imidazole from N(2)-formyl-N(1)-(5-phospho-D-ribosyl)glycinamide: step 2/2. This is Phosphoribosylformylglycinamidine cyclo-ligase from Psychrobacter cryohalolentis (strain ATCC BAA-1226 / DSM 17306 / VKM B-2378 / K5).